The following is a 323-amino-acid chain: MNALPPAIFLMGPTAAGKTDLAIELSKVLPCELISVDSALVYRGMDIGTAKPSKAQLAEYPHRLIDILDPAQSYSAADFRSDALAAMAEITARGNIPLLVGGTMLYFKALLHGLADMPAADAQVRAQLEADAQAYGWQSLHDQLAVVDPVSAARIHPNDPQRLIRALEVYRVSGMSMTAHREQQTAQSTEAAASGRQQLPYTVANLAIAPADRKVLHQRIALRFEQMLDQGFLDEVLALRSRGDLHSGLPSIRAVGYRQVWDHLDGKLTRDEMQERGIIATRQLAKRQFTWLRSWEDLHWLDSLASDNLSRALKYLGSVSILS.

12-19 (GPTAAGKT) contributes to the ATP binding site. A substrate-binding site is contributed by 14–19 (TAAGKT). Interaction with substrate tRNA stretches follow at residues 37–40 (DSAL) and 161–165 (QRLIR).

Belongs to the IPP transferase family. In terms of assembly, monomer. It depends on Mg(2+) as a cofactor.

The catalysed reaction is adenosine(37) in tRNA + dimethylallyl diphosphate = N(6)-dimethylallyladenosine(37) in tRNA + diphosphate. Functionally, catalyzes the transfer of a dimethylallyl group onto the adenine at position 37 in tRNAs that read codons beginning with uridine, leading to the formation of N6-(dimethylallyl)adenosine (i(6)A). The chain is tRNA dimethylallyltransferase from Pseudomonas savastanoi pv. phaseolicola (strain 1448A / Race 6) (Pseudomonas syringae pv. phaseolicola (strain 1448A / Race 6)).